The following is a 226-amino-acid chain: Gap junction beta-2 protein (226 aa).

An intramembrane segment occupies 2-13; the sequence is DWGALQTILGGV. Residues 14–20 lie on the Cytoplasmic side of the membrane; that stretch reads NKYSTSI. The chain crosses the membrane as a helical span at residues 21–40; the sequence is GKIWLTVLFIFRIMILVVAA. Over 41–73 the chain is Extracellular; it reads KEVWGDEQADFVCNTLQPGCKNVCYDHYFPISH. Positions 42, 45, and 47 each coordinate Ca(2+). 3 disulfide bridges follow: cysteine 53–cysteine 180, cysteine 60–cysteine 174, and cysteine 64–cysteine 169. The helical transmembrane segment at 74–94 threads the bilayer; that stretch reads IRLWALQLIFVSTPALLVAMH. Residues 95–135 are Cytoplasmic-facing; sequence VAYRRHEKKRKFIKGEIKNEFKDIEEIKTQKVRIEGSLWWT. A helical membrane pass occupies residues 136 to 156; it reads YTSSIFFRVVFEAAFMYVFYV. Over 157–189 the chain is Extracellular; that stretch reads MYDGFSMQRLVKCNAWPCPNTVDCFVSRPTEKT. Residues 190 to 210 form a helical membrane-spanning segment; the sequence is VFTVFMIAVSGICILLNVTEL. At 211–226 the chain is on the cytoplasmic side; sequence CYLLIRYCSGKSKKPV.

Belongs to the connexin family. Beta-type (group I) subfamily. As to quaternary structure, a hemichannel or connexon is composed of a hexamer of connexins. A functional gap junction is formed by the apposition of two hemichannels. Forms heteromeric channels with GJB4. Interacts with CNST.

Its subcellular location is the cell membrane. It is found in the cell junction. It localises to the gap junction. Structural component of gap junctions. Gap junctions are dodecameric channels that connect the cytoplasm of adjoining cells. They are formed by the docking of two hexameric hemichannels, one from each cell membrane. Small molecules and ions diffuse from one cell to a neighboring cell via the central pore. This chain is Gap junction beta-2 protein (GJB2), found in Macaca mulatta (Rhesus macaque).